We begin with the raw amino-acid sequence, 208 residues long: N-hydroxyputrescine acetyltransferase (208 aa).

Belongs to the IucB family.

It catalyses the reaction N-hydroxyputrescine + acetyl-CoA = N(1)-acetyl-N(1)-hydroxyputrescine + CoA. It functions in the pathway siderophore biosynthesis. N-acetyltransferase involved in the biosynthesis of fimsbactin A, the major siderophore produced by A.baumannii. Catalyzes the acetylation of N-hydroxyputrescine to form N(1)-acetyl-N(1)-hydroxyputrescine (ahPutr). This chain is N-hydroxyputrescine acetyltransferase, found in Acinetobacter baumannii (strain ATCC 17978 / DSM 105126 / CIP 53.77 / LMG 1025 / NCDC KC755 / 5377).